The sequence spans 651 residues: Transcription factor E2-alpha (651 aa).

Disordered stretches follow at residues 32 to 107, 131 to 208, and 341 to 378; these read ANGK…SERN, LSLS…KTPS, and DHSSNNFSPSPSTPVGSPQGLPGTSQWPRAGAPSALSP. Composition is skewed to low complexity over residues 56 to 73, 131 to 148, and 341 to 354; these read SSGSWGSSDQNSSSFDPS, LSLSSPGPLSPSGIKSSS, and DHSSNNFSPSPSTP. S135 and S140 each carry phosphoserine. Phosphothreonine is present on T353. S357 carries the post-translational modification Phosphoserine. R369 bears the Omega-N-methylarginine mark. At S377 the chain carries Phosphoserine. Residues 387–422 form a leucine-zipper region; the sequence is LSKMEDRLDEAIHVLRSHAVGTASDLHGLLPGHGAL. The tract at residues 457 to 549 is disordered; sequence HNHASLPSQP…KAEREKERRV (93 aa). Positions 461–479 are enriched in low complexity; it reads SLPSQPSSLPDLSQRPPDS. A Glycyl lysine isopeptide (Lys-Gly) (interchain with G-Cter in SUMO2) cross-link involves residue K496. S526 bears the Phosphoserine mark. Phosphothreonine is present on D528. D533 is modified (phosphoserine). Residues 539–549 show a composition bias toward basic and acidic residues; sequence QKAEREKERRV. In terms of domain architecture, bHLH spans 546 to 599; the sequence is ERRVANNARERLRVRDINEAFKELGRMCQLHLSSEKPQTKLLILHQAVAVILSL. Residue K622 forms a Glycyl lysine isopeptide (Lys-Gly) (interchain with G-Cter in SUMO2) linkage.

Homodimer. Heterodimer; efficient DNA binding requires dimerization with another bHLH protein. Forms a heterodimer with TWIST1 and TWIST2. Forms a heterodimer with NEUROD1; the heterodimer is inhibited in presence of ID2, but not NR0B2, to E-box element. Forms a heterodimer with TCF15; the heterodimer binds E-box element. Forms a heterodimer with MYOG; heterodimerization enhances MYOG DNA-binding and transcriptional activities. Forms a heterodimer with ATOH8; repress transcription of TCF3 and TCF3-NEUROG3 dimer-induced transactivation of E box-dependent promoters. Component of a nuclear TAL-1 complex composed at least of CBFA2T3, LDB1, TAL1 and TCF3. Interacts with NEUROD2. Interacts with EP300. Interacts with PTF1A, TGFB1I1 and UBE2I. Interacts with BHLHA9. Interacts with ASB2; the interaction is mediated by SKP2 and targets TCF3 for Notch-induced proteasomal degradation. Interacts with transcription factor ASCL5/AmeloD. As to quaternary structure, forms a heterodimer with ATOH7; required for ATOH7 DNA-binding. In terms of assembly, interacts with RALGAPA1. Interacts with FIGLA. Post-translationally, phosphorylated following NGF stimulation. In terms of processing, undergoes Notch-induced ubiquitination and subsequent proteasomal degradation which is mediated by ASB1 or ASB2, the substrate-recognition components of probable ECS E3 ubiquitin-protein ligase complexes.

The protein localises to the nucleus. Transcriptional regulator involved in the initiation of neuronal differentiation and mesenchymal to epithelial transition. Heterodimers between TCF3 and tissue-specific basic helix-loop-helix (bHLH) proteins play major roles in determining tissue-specific cell fate during embryogenesis, like muscle or early B-cell differentiation. Together with TCF15, required for the mesenchymal to epithelial transition. Dimers bind DNA on E-box motifs: 5'-CANNTG-3'. Binds to the kappa-E2 site in the kappa immunoglobulin gene enhancer. Binds to IEB1 and IEB2, which are short DNA sequences in the insulin gene transcription control region. Its function is as follows. Facilitates ATOH7 binding to DNA at the consensus sequence 5'-CAGGTG-3', and positively regulates transcriptional activity. In Mus musculus (Mouse), this protein is Transcription factor E2-alpha (Tcf3).